The sequence spans 449 residues: UPF0761 membrane protein Cpha266_1653 (449 aa).

The next 6 helical transmembrane spans lie at 77-97 (LLSLVPLLSVTLSILRVFPVF), 133-153 (SVPLLGVVFLFIIALSLISTI), 173-193 (FTLYWTVLTLGPVLIGSSLVA), 214-234 (LLSFLPFLNSVIAFFLLYMLV), 244-264 (AVYGSLLAAVLFELSKKWFVF), and 277-297 (GALSVIPMLFFWIYLEWVVVL).

It belongs to the UPF0761 family.

Its subcellular location is the cell inner membrane. The polypeptide is UPF0761 membrane protein Cpha266_1653 (Chlorobium phaeobacteroides (strain DSM 266 / SMG 266 / 2430)).